A 765-amino-acid chain; its full sequence is Multifunctional tryptophan biosynthesis protein (765 aa).

Residues 2–196 (ATLLIDNYDS…LSLRGGNWDE (195 aa)) enclose the Glutamine amidotransferase type-1 domain. 53 to 55 (GPG) contacts L-glutamine. Cysteine 81 (nucleophile; for GATase activity) is an active-site residue. L-glutamine is bound by residues glutamine 85 and 131–132 (SL). Residues histidine 170 and glutamate 172 each act as for GATase activity in the active site. Residues 231–494 (TILSRIYAQR…NLKEFVAELL (264 aa)) are indole-3-glycerol phosphate synthase. The N-(5'-phosphoribosyl)anthranilate isomerase stretch occupies residues 512-765 (QVKICGISSV…VEKAKSINLQ (254 aa)).

The enzyme catalyses N-(5-phospho-beta-D-ribosyl)anthranilate = 1-(2-carboxyphenylamino)-1-deoxy-D-ribulose 5-phosphate. It catalyses the reaction 1-(2-carboxyphenylamino)-1-deoxy-D-ribulose 5-phosphate + H(+) = (1S,2R)-1-C-(indol-3-yl)glycerol 3-phosphate + CO2 + H2O. The catalysed reaction is chorismate + L-glutamine = anthranilate + pyruvate + L-glutamate + H(+). Its pathway is amino-acid biosynthesis; L-tryptophan biosynthesis; L-tryptophan from chorismate: step 1/5. The protein operates within amino-acid biosynthesis; L-tryptophan biosynthesis; L-tryptophan from chorismate: step 3/5. It functions in the pathway amino-acid biosynthesis; L-tryptophan biosynthesis; L-tryptophan from chorismate: step 4/5. Its function is as follows. Trifunctional enzyme bearing the Gln amidotransferase (GATase) domain of anthranilate synthase, indole-glycerolphosphate synthase, and phosphoribosylanthranilate isomerase activities. The protein is Multifunctional tryptophan biosynthesis protein (trp1) of Phycomyces blakesleeanus.